Here is a 620-residue protein sequence, read N- to C-terminus: mRNA cap guanine-N(7) methyltransferase (620 aa).

Disordered stretches follow at residues 1-176 (MLPP…APSS) and 193-304 (AHAN…DDEY). Polar residues predominate over residues 29 to 44 (RSPSMSLSPRSQNQSL). 2 stretches are compositionally biased toward low complexity: residues 45–60 (PYPSSRPGSAAGSAHP) and 136–157 (PQPTTTPSSPSTSQHTPYTPHH). The region spanning 345 to 620 (SPIIGLKKFN…LYMGFAFEKM (276 aa)) is the mRNA cap 0 methyltransferase domain. 354–355 (NN) contributes to the mRNA binding site. S-adenosyl-L-methionine is bound by residues K358, G377, D399, D428, Q454, and Y459.

Belongs to the class I-like SAM-binding methyltransferase superfamily. mRNA cap 0 methyltransferase family.

It is found in the nucleus. The enzyme catalyses a 5'-end (5'-triphosphoguanosine)-ribonucleoside in mRNA + S-adenosyl-L-methionine = a 5'-end (N(7)-methyl 5'-triphosphoguanosine)-ribonucleoside in mRNA + S-adenosyl-L-homocysteine. In terms of biological role, responsible for methylating the 5'-cap structure of mRNAs. This chain is mRNA cap guanine-N(7) methyltransferase (ABD1), found in Cryptococcus neoformans var. neoformans serotype D (strain JEC21 / ATCC MYA-565) (Filobasidiella neoformans).